The sequence spans 83 residues: U20-theraphotoxin-Cg1a 1 (83 aa).

The first 21 residues, 1–21 (MKVSVLITLAVLGVMFVWTSA), serve as a signal peptide directing secretion. Residues 22-47 (AELEERGSDQPAWLKSLERIFQSEER) constitute a propeptide that is removed on maturation. Disulfide bonds link Cys-49/Cys-63, Cys-56/Cys-68, and Cys-62/Cys-76.

Belongs to the neurotoxin 10 (Hwtx-1) family. 40 (Jztx-35) subfamily. Expressed by the venom gland.

The protein localises to the secreted. In terms of biological role, probable ion channel inhibitor. This chain is U20-theraphotoxin-Cg1a 1, found in Chilobrachys guangxiensis (Chinese earth tiger tarantula).